We begin with the raw amino-acid sequence, 615 residues long: Ankyrin repeat and LEM domain-containing protein 1 (615 aa).

3 ANK repeats span residues 39-71, 75-104, and 108-137; these read DGAA…DPNA, EALT…DPAL, and DGLR…RTRT. Positions 138 to 210 are disordered; it reads RTRIGAETQE…DKHGSSASPP (73 aa). Positions 271-280 match the Nuclear export signal motif; it reads LNARLQALTL. Over residues 283–294 the composition is skewed to polar residues; it reads PNAAGFQSSPSS. The interval 283–315 is disordered; that stretch reads PNAAGFQSSPSSMPLLDRSPAHSPPRTPTPGAS. The LEM domain occupies 355–399; the sequence is HLPVSTVSDLELLKGLRALGENPHPITPFTRQLYHQQLEEAQIAP. Positions 448–566 constitute a GIY-YIG domain; the sequence is KSSFTYLLLD…ALGIQTLTNQ (119 aa). The Nuclear localization signal motif lies at 579-586; sequence PPARRRRL.

In terms of assembly, interacts (via LEM domain) with BANF1; the interaction may favor BANF1 dimerization. Expression is predominant in adult bone marrow.

The protein resides in the cytoplasm. Its subcellular location is the nucleus. In terms of biological role, endonuclease that probably plays a role in the DNA damage response and DNA repair. This chain is Ankyrin repeat and LEM domain-containing protein 1 (ANKLE1), found in Homo sapiens (Human).